The chain runs to 132 residues: Phosphomevalonate dehydratase small subunit (132 aa).

The Proton acceptor role is filled by serine 62.

The protein belongs to the AcnX type II small subunit family. In terms of assembly, heterodimer composed of a large subunit (PMDh-L) and a small subunit (PMDh-S).

It catalyses the reaction (R)-5-phosphomevalonate = (2E)-3-methyl-5-phosphooxypent-2-enoate + H2O. It participates in isoprenoid biosynthesis; isopentenyl diphosphate biosynthesis via mevalonate pathway. Component of a hydro-lyase that catalyzes the dehydration of mevalonate 5-phosphate (MVA5P) to form trans-anhydromevalonate 5-phosphate (tAHMP). Involved in the archaeal mevalonate (MVA) pathway, which provides fundamental precursors for isoprenoid biosynthesis, such as isopentenyl diphosphate (IPP) and dimethylallyl diphosphate (DMAPP). This Methanocella arvoryzae (strain DSM 22066 / NBRC 105507 / MRE50) protein is Phosphomevalonate dehydratase small subunit.